Here is a 299-residue protein sequence, read N- to C-terminus: UPF0603 protein OsI_019212, chloroplastic (299 aa).

Low complexity-rich tracts occupy residues 1-14 and 22-36; these read METLLSPSTLLSPL and ASPAASASSSSSSPA. A chloroplast-targeting transit peptide spans 1–41; sequence METLLSPSTLLSPLRGSKKKPASPAASASSSSSSPARSVVS. Disordered regions lie at residues 1–60 and 244–265; these read METL…WRGD and PDPGGPTFKDNKRESNFKTKEE. A thylakoid-targeting transit peptide spans 42-98; that stretch reads CALRRQQPPPQAVAAWRGDGGRGGGVGSWATFLQHGLAAAALSLAISMAPAPAPAVA. Basic and acidic residues predominate over residues 252-265; the sequence is KDNKRESNFKTKEE. Residues 276-296 form a helical membrane-spanning segment; that stretch reads VVGGLLVIAFVVPMAQYYAYI.

This sequence belongs to the UPF0603 family.

It is found in the plastid. Its subcellular location is the chloroplast thylakoid membrane. In Oryza sativa subsp. indica (Rice), this protein is UPF0603 protein OsI_019212, chloroplastic.